Consider the following 406-residue polypeptide: Argininosuccinate synthase (406 aa).

Residues 12 to 20 (AYSGGLDTS) and Ala39 each bind ATP. Residues Tyr90 and Ser95 each coordinate L-citrulline. Gly120 is a binding site for ATP. Positions 122, 126, and 127 each coordinate L-aspartate. Asn126 contacts L-citrulline. Residues Arg130, Ser179, Ser188, Glu264, and Tyr276 each coordinate L-citrulline.

This sequence belongs to the argininosuccinate synthase family. Type 1 subfamily. In terms of assembly, homotetramer.

The protein resides in the cytoplasm. It catalyses the reaction L-citrulline + L-aspartate + ATP = 2-(N(omega)-L-arginino)succinate + AMP + diphosphate + H(+). It participates in amino-acid biosynthesis; L-arginine biosynthesis; L-arginine from L-ornithine and carbamoyl phosphate: step 2/3. This Geobacter sp. (strain M21) protein is Argininosuccinate synthase.